The chain runs to 103 residues: O2 contryphan Vc1 (103 aa).

An N-terminal signal peptide occupies residues 1-23 (MGKLTILFLVAAALLSTQVMVQG). Residues 24-67 (DGAHERTEAEEPQHHGAKRQDGTGGYPVDDVDMMQRIFRTPLKR) constitute a propeptide that is removed on maturation. Basic and acidic residues predominate over residues 25–44 (GAHERTEAEEPQHHGAKRQD). The disordered stretch occupies residues 25–50 (GAHERTEAEEPQHHGAKRQDGTGGYP). Q68 carries the pyrrolidone carboxylic acid modification. C70 and C83 are joined by a disulfide. The propeptide occupies 99–103 (RRGRQ).

It belongs to the O2 superfamily. Pyrrolidone carboxylic acid at position 1 has no significant effect on the structure of contryphan-Vc1. In terms of tissue distribution, expressed by the venom gland.

It localises to the secreted. Functionally, unknown. Intracranial injection of the peptide into mice does not produce toxic effects. In addition, the peptide does not produce any observable changes to normal or depolarization-induced intracellular calcium levels in mouse dorsal root ganglion cells. The polypeptide is O2 contryphan Vc1 (Conus victoriae (Queen Victoria cone)).